The sequence spans 243 residues: Carboxy-S-adenosyl-L-methionine synthase (243 aa).

S-adenosyl-L-methionine contacts are provided by residues Tyr40, 65-67 (GCS), 90-91 (DN), 118-119 (DI), Asn133, and Arg200.

It belongs to the class I-like SAM-binding methyltransferase superfamily. Cx-SAM synthase family. As to quaternary structure, homodimer.

The enzyme catalyses prephenate + S-adenosyl-L-methionine = carboxy-S-adenosyl-L-methionine + 3-phenylpyruvate + H2O. In terms of biological role, catalyzes the conversion of S-adenosyl-L-methionine (SAM) to carboxy-S-adenosyl-L-methionine (Cx-SAM). The chain is Carboxy-S-adenosyl-L-methionine synthase from Shewanella baltica (strain OS223).